Consider the following 274-residue polypeptide: 2,3,4,5-tetrahydropyridine-2,6-dicarboxylate N-succinyltransferase (274 aa).

Substrate-binding residues include Arg104 and Asp141.

The protein belongs to the transferase hexapeptide repeat family. As to quaternary structure, homotrimer.

It is found in the cytoplasm. The catalysed reaction is (S)-2,3,4,5-tetrahydrodipicolinate + succinyl-CoA + H2O = (S)-2-succinylamino-6-oxoheptanedioate + CoA. It functions in the pathway amino-acid biosynthesis; L-lysine biosynthesis via DAP pathway; LL-2,6-diaminopimelate from (S)-tetrahydrodipicolinate (succinylase route): step 1/3. The protein is 2,3,4,5-tetrahydropyridine-2,6-dicarboxylate N-succinyltransferase of Shewanella pealeana (strain ATCC 700345 / ANG-SQ1).